Here is a 189-residue protein sequence, read N- to C-terminus: Mitochondrial FAD-linked sulfhydryl oxidase ERV1 (189 aa).

Residues 83–183 enclose the ERV/ALR sulfhydryl oxidase domain; it reads DPPDVEQLGR…FDCNFWEKRW (101 aa). FAD is bound by residues 88–95, histidine 99, and tyrosine 128; that span reads EQLGRSSW. 2 cysteine pairs are disulfide-bonded: cysteine 130–cysteine 133 and cysteine 159–cysteine 176. Residues 159–171 and 182–183 contribute to the FAD site; these read CEAHNKVNKKLRK and RW.

In terms of assembly, homodimer. Interacts with MIA40, forming transient intermolecular disulfide bridges. The cofactor is FAD.

It is found in the mitochondrion intermembrane space. It carries out the reaction 2 R'C(R)SH + O2 = R'C(R)S-S(R)CR' + H2O2. FAD-dependent sulfhydryl oxidase that catalyzes disulfide bond formation. Required for the import and folding of small cysteine-containing proteins in the mitochondrial intermembrane space (IMS). Forms a redox cycle with MIA40 that involves a disulfide relay system. Important for maintaining the cysteine residues in MIA40 in an oxidized state. Reduced ERV1 is reoxidized by cytochrome c. Required for the maturation of cytoplasmic, but not of mitochondrial Fe/S proteins. This chain is Mitochondrial FAD-linked sulfhydryl oxidase ERV1 (ERV1), found in Saccharomyces cerevisiae (strain ATCC 204508 / S288c) (Baker's yeast).